The primary structure comprises 57 residues: Large ribosomal subunit protein bL33 (57 aa).

It belongs to the bacterial ribosomal protein bL33 family.

In Shewanella sp. (strain W3-18-1), this protein is Large ribosomal subunit protein bL33.